Reading from the N-terminus, the 589-residue chain is Probable translation initiation factor IF-2 (589 aa).

Residues 3–224 (VRSPFVVVMG…AGVSQRFIPR (222 aa)) enclose the tr-type G domain. The interval 12–19 (GHVDVGKT) is G1. Position 12 to 19 (12 to 19 (GHVDVGKT)) interacts with GTP. Residues 37-41 (MITQH) form a G2 region. The G3 stretch occupies residues 78–81 (DTPG). GTP contacts are provided by residues 78–82 (DTPGH) and 132–135 (NKLD). Positions 132 to 135 (NKLD) are G4. The interval 200–202 (SAV) is G5.

Belongs to the TRAFAC class translation factor GTPase superfamily. Classic translation factor GTPase family. IF-2 subfamily.

In terms of biological role, function in general translation initiation by promoting the binding of the formylmethionine-tRNA to ribosomes. Seems to function along with eIF-2. The sequence is that of Probable translation initiation factor IF-2 from Pyrobaculum neutrophilum (strain DSM 2338 / JCM 9278 / NBRC 100436 / V24Sta) (Thermoproteus neutrophilus).